The following is a 496-amino-acid chain: Probable cytosol aminopeptidase (496 aa).

The Mn(2+) site is built by K251 and D256. K263 is a catalytic residue. Mn(2+) contacts are provided by D274, D333, and E335. R337 is an active-site residue.

The protein belongs to the peptidase M17 family. The cofactor is Mn(2+).

The protein localises to the cytoplasm. It catalyses the reaction Release of an N-terminal amino acid, Xaa-|-Yaa-, in which Xaa is preferably Leu, but may be other amino acids including Pro although not Arg or Lys, and Yaa may be Pro. Amino acid amides and methyl esters are also readily hydrolyzed, but rates on arylamides are exceedingly low.. It carries out the reaction Release of an N-terminal amino acid, preferentially leucine, but not glutamic or aspartic acids.. In terms of biological role, presumably involved in the processing and regular turnover of intracellular proteins. Catalyzes the removal of unsubstituted N-terminal amino acids from various peptides. The polypeptide is Probable cytosol aminopeptidase (Acidovorax sp. (strain JS42)).